The following is a 728-amino-acid chain: Polyribonucleotide nucleotidyltransferase (728 aa).

Mg(2+) is bound by residues Asp-503 and Asp-509. One can recognise a KH domain in the interval 570–629 (PRLTTIKIPSDCIGMVIGKGGETIRGITEETGAEINIADDGTVTIACTTKEGTDAALATI). One can recognise an S1 motif domain in the interval 639 to 713 (GNIYVGKVRD…GKTKFALSIK (75 aa)).

The protein belongs to the polyribonucleotide nucleotidyltransferase family. It depends on Mg(2+) as a cofactor.

It localises to the cytoplasm. The catalysed reaction is RNA(n+1) + phosphate = RNA(n) + a ribonucleoside 5'-diphosphate. Functionally, involved in mRNA degradation. Catalyzes the phosphorolysis of single-stranded polyribonucleotides processively in the 3'- to 5'-direction. In Chlorobium chlorochromatii (strain CaD3), this protein is Polyribonucleotide nucleotidyltransferase.